The sequence spans 623 residues: V-type proton ATPase catalytic subunit A (623 aa).

Residue 252–259 coordinates ATP; that stretch reads GAFGCGKT.

It belongs to the ATPase alpha/beta chains family. In terms of assembly, V-ATPase is a heteromultimeric enzyme composed of a peripheral catalytic V1 complex (main components: subunits A, B, C, D, E, and F) attached to an integral membrane V0 proton pore complex (main component: the proteolipid protein).

It catalyses the reaction ATP + H2O + 4 H(+)(in) = ADP + phosphate + 5 H(+)(out). In terms of biological role, catalytic subunit of the peripheral V1 complex of vacuolar ATPase. V-ATPase vacuolar ATPase is responsible for acidifying a variety of intracellular compartments in eukaryotic cells. This is V-type proton ATPase catalytic subunit A (CVA69.24) from Gossypium hirsutum (Upland cotton).